Here is a 423-residue protein sequence, read N- to C-terminus: Histidine--tRNA ligase (423 aa).

The protein belongs to the class-II aminoacyl-tRNA synthetase family. In terms of assembly, homodimer.

It is found in the cytoplasm. It catalyses the reaction tRNA(His) + L-histidine + ATP = L-histidyl-tRNA(His) + AMP + diphosphate + H(+). The protein is Histidine--tRNA ligase (hisS) of Haemophilus influenzae (strain ATCC 51907 / DSM 11121 / KW20 / Rd).